Reading from the N-terminus, the 321-residue chain is Lipoyl synthase (321 aa).

Residues C68, C73, C79, C94, C98, C101, and S308 each coordinate [4Fe-4S] cluster. The 218-residue stretch at 80 to 297 (FNHGTATFMI…KALADELGFT (218 aa)) folds into the Radical SAM core domain.

The protein belongs to the radical SAM superfamily. Lipoyl synthase family. [4Fe-4S] cluster serves as cofactor.

The protein resides in the cytoplasm. The enzyme catalyses [[Fe-S] cluster scaffold protein carrying a second [4Fe-4S](2+) cluster] + N(6)-octanoyl-L-lysyl-[protein] + 2 oxidized [2Fe-2S]-[ferredoxin] + 2 S-adenosyl-L-methionine + 4 H(+) = [[Fe-S] cluster scaffold protein] + N(6)-[(R)-dihydrolipoyl]-L-lysyl-[protein] + 4 Fe(3+) + 2 hydrogen sulfide + 2 5'-deoxyadenosine + 2 L-methionine + 2 reduced [2Fe-2S]-[ferredoxin]. The protein operates within protein modification; protein lipoylation via endogenous pathway; protein N(6)-(lipoyl)lysine from octanoyl-[acyl-carrier-protein]: step 2/2. Catalyzes the radical-mediated insertion of two sulfur atoms into the C-6 and C-8 positions of the octanoyl moiety bound to the lipoyl domains of lipoate-dependent enzymes, thereby converting the octanoylated domains into lipoylated derivatives. The polypeptide is Lipoyl synthase (Shewanella frigidimarina (strain NCIMB 400)).